Consider the following 840-residue polypeptide: Protein argonaute-2 (840 aa).

One can recognise a PAZ domain in the interval 210–329 (PVIEFVCEVL…LPLEVCNIVA (120 aa)). Serine 368 is modified (phosphoserine). The region spanning 498 to 799 (LVVVILPGKT…VAFRARYHLV (302 aa)) is the Piwi domain. Residues aspartate 578 and aspartate 650 each coordinate a divalent metal cation. The residue at position 681 (proline 681) is a 4-hydroxyproline. A divalent metal cation is bound at residue histidine 788. Phosphoserine is present on residues serine 805, serine 809, serine 812, and serine 815.

This sequence belongs to the argonaute family. Ago subfamily. As to quaternary structure, interacts with DICER1 through its Piwi domain and with TARBP2 during assembly of the RNA-induced silencing complex (RISC). Together, DICER1, AGO2 and TARBP2 constitute the trimeric RISC loading complex (RLC), or micro-RNA (miRNA) loading complex (miRLC). Within the RLC/miRLC, DICER1 and TARBP2 are required to process precursor miRNAs (pre-miRNAs) to mature miRNAs and then load them onto AGO2. AGO2 bound to the mature miRNA constitutes the minimal RISC and may subsequently dissociate from DICER1 and TARBP2. Note however that the term RISC has also been used to describe the trimeric RLC/miRLC. The formation of RISC complexes containing siRNAs rather than miRNAs appears to occur independently of DICER1. Interacts with AGO1. Also interacts with DDB1, DDX5, DDX6, DDX20, DHX30, DHX36, DDX47, DHX9, ELAVL, FXR1, GEMIN4, HNRNPF, IGF2BP1, ILF3, IMP8, MATR3, PABPC1, PRMT5, P4HA1, P4HB, RBM4, SART3, TNRC6A, TNRC6B, UPF1 and YBX1. Interacts with the P-body components DCP1A and XRN1. Associates with polysomes and messenger ribonucleoproteins (mNRPs). Interacts with RBM4; the interaction is modulated under stress-induced conditions, occurs under both cell proliferation and differentiation conditions and in an RNA- and phosphorylation-independent manner. Interacts with LIMD1, WTIP and AJUBA. Interacts with TRIM71; the interaction increases in presence of RNA. Interacts with APOBEC3G in an RNA-dependent manner. Interacts with APOBEC3A, APOBEC3C, APOBEC3F and APOBEC3H. Interacts with DICER1, TARBP2, EIF6, MOV10 and RPL7A (60S ribosome subunit); they form a large RNA-induced silencing complex (RISC). Interacts with FMR1. Interacts with ZFP36. Interacts with RC3H1; the interaction is RNA independent. Found in a complex composed of AGO2, CHD7 and ARB2A. Interacts with SND1 and SYT11. Interacts with CLNK. Interacts with GARRE1. Post-translationally, hydroxylated. 4-hydroxylation appears to enhance protein stability but is not required for miRNA-binding or endonuclease activity. Ubiquitinated on surface-exposed lysines by a SCF-like E3 ubiquitin-protein ligase complex containing ZSWIM8 during target-directed microRNA degradation (TDMD), a process that mediates degradation of microRNAs (miRNAs). Ubiquitination by the SCF-like E3 ubiquitin-protein ligase complex containing ZSWIM8 leads to its subsequent degradation, thereby exposing miRNAs for degradation. ZSWIM8 recognizes and binds AGO2 when it is engaged with a TDMD target. In terms of processing, phosphorylation at Ser-368 by AKT3; leads to up-regulate translational repression of microRNA target and down-regulate endonucleolytic cleavage. Post-translationally, a phosphorylation cycle of C-terminal serine cluster (Ser-805-Ser-815) regulates the release of target mRNAs. Target-binding leads to phosphorylation of these residues by CSNK1A1, which reduces the affinity of AGO2 for mRNA and enables target release. The ANKRD52-PPP6C phosphatase complex dephosphorylates the residues, which primes AGO2 for binding a new target.

Its subcellular location is the cytoplasm. The protein localises to the P-body. It is found in the nucleus. The catalysed reaction is Endonucleolytic cleavage to 5'-phosphomonoester.. Functionally, required for RNA-mediated gene silencing (RNAi) by the RNA-induced silencing complex (RISC). The 'minimal RISC' appears to include AGO2 bound to a short guide RNA such as a microRNA (miRNA) or short interfering RNA (siRNA). These guide RNAs direct RISC to complementary mRNAs that are targets for RISC-mediated gene silencing. The precise mechanism of gene silencing depends on the degree of complementarity between the miRNA or siRNA and its target. Binding of RISC to a perfectly complementary mRNA generally results in silencing due to endonucleolytic cleavage of the mRNA specifically by AGO2. Binding of RISC to a partially complementary mRNA results in silencing through inhibition of translation, and this is independent of endonuclease activity. May inhibit translation initiation by binding to the 7-methylguanosine cap, thereby preventing the recruitment of the translation initiation factor eIF4-E. May also inhibit translation initiation via interaction with EIF6, which itself binds to the 60S ribosomal subunit and prevents its association with the 40S ribosomal subunit. The inhibition of translational initiation leads to the accumulation of the affected mRNA in cytoplasmic processing bodies (P-bodies), where mRNA degradation may subsequently occur. In some cases RISC-mediated translational repression is also observed for miRNAs that perfectly match the 3' untranslated region (3'-UTR). Can also up-regulate the translation of specific mRNAs under certain growth conditions. Binds to the AU element of the 3'-UTR of the TNF (TNF-alpha) mRNA and up-regulates translation under conditions of serum starvation. Also required for transcriptional gene silencing (TGS), in which short RNAs known as antigene RNAs or agRNAs direct the transcriptional repression of complementary promoter regions. In Oryctolagus cuniculus (Rabbit), this protein is Protein argonaute-2 (AGO2).